We begin with the raw amino-acid sequence, 371 residues long: Zinc finger CCCH domain-containing protein 21 (371 aa).

The disordered stretch occupies residues 1–64 (MPPKQQPKAD…AAKKKKEEEK (64 aa)). Positions 10-23 (DLAKKQKQVEDKTF) are enriched in basic and acidic residues. Positions 34 to 46 (VQKYVQSLKQSVQ) are enriched in polar residues. 2 consecutive C3H1-type zinc fingers follow at residues 88–115 (DPKS…HDLN) and 159–197 (KPTD…HALP). 2 coiled-coil regions span residues 205–237 (QMKA…ATQM) and 283–317 (FVDD…GTSK). A disordered region spans residues 290 to 371 (CEEYEREREQ…IREPNDEGSS (82 aa)). Residues 292–312 (EYEREREQEETEQKAKNKEAE) show a composition bias toward basic and acidic residues. Residues 330–352 (NEEEEDDDDDDDDLDMDELDELE) show a composition bias toward acidic residues.

This Arabidopsis thaliana (Mouse-ear cress) protein is Zinc finger CCCH domain-containing protein 21.